Consider the following 589-residue polypeptide: Kelch-like protein diablo (589 aa).

A disordered region spans residues 1-22 (MGDVLISDRPPSPARLSHTSEK). A BTB domain is found at 41 to 108 (CDVVINVSGR…CYTSHIVVEE (68 aa)). The BACK domain occupies 143-245 (CLGIRAFADT…SPKFLVGTVG (103 aa)). Kelch repeat units lie at residues 292–338 (VLFA…VLND), 340–386 (LYAV…VLDG), 387–433 (FLYA…VLGG), 435–480 (LYAI…VFNN), 482–527 (IYAV…VVNG), and 528–574 (QLYA…VMRA).

It participates in protein modification; protein ubiquitination. In terms of biological role, probable substrate-specific adapter of an E3 ubiquitin-protein ligase complex which mediates the ubiquitination and subsequent proteasomal degradation of target proteins. May have a role in synapse differentiation and growth. The sequence is that of Kelch-like protein diablo from Aedes aegypti (Yellowfever mosquito).